A 130-amino-acid polypeptide reads, in one-letter code: Large ribosomal subunit protein bL12 (130 aa).

This sequence belongs to the bacterial ribosomal protein bL12 family. In terms of assembly, homodimer. Part of the ribosomal stalk of the 50S ribosomal subunit. Forms a multimeric L10(L12)X complex, where L10 forms an elongated spine to which 2 to 4 L12 dimers bind in a sequential fashion. Binds GTP-bound translation factors.

Forms part of the ribosomal stalk which helps the ribosome interact with GTP-bound translation factors. Is thus essential for accurate translation. This chain is Large ribosomal subunit protein bL12, found in Nostoc punctiforme (strain ATCC 29133 / PCC 73102).